A 186-amino-acid polypeptide reads, in one-letter code: Elongation factor P (186 aa).

This sequence belongs to the elongation factor P family.

Its subcellular location is the cytoplasm. Its pathway is protein biosynthesis; polypeptide chain elongation. Functionally, involved in peptide bond synthesis. Stimulates efficient translation and peptide-bond synthesis on native or reconstituted 70S ribosomes in vitro. Probably functions indirectly by altering the affinity of the ribosome for aminoacyl-tRNA, thus increasing their reactivity as acceptors for peptidyl transferase. This Prochlorococcus marinus (strain MIT 9215) protein is Elongation factor P.